The sequence spans 253 residues: 5'/3'-nucleotidase SurE (253 aa).

Asp-8, Asp-9, Ser-39, and Asn-92 together coordinate a divalent metal cation.

This sequence belongs to the SurE nucleotidase family. A divalent metal cation is required as a cofactor.

Its subcellular location is the cytoplasm. The catalysed reaction is a ribonucleoside 5'-phosphate + H2O = a ribonucleoside + phosphate. It carries out the reaction a ribonucleoside 3'-phosphate + H2O = a ribonucleoside + phosphate. The enzyme catalyses [phosphate](n) + H2O = [phosphate](n-1) + phosphate + H(+). In terms of biological role, nucleotidase with a broad substrate specificity as it can dephosphorylate various ribo- and deoxyribonucleoside 5'-monophosphates and ribonucleoside 3'-monophosphates with highest affinity to 3'-AMP. Also hydrolyzes polyphosphate (exopolyphosphatase activity) with the preference for short-chain-length substrates (P20-25). Might be involved in the regulation of dNTP and NTP pools, and in the turnover of 3'-mononucleotides produced by numerous intracellular RNases (T1, T2, and F) during the degradation of various RNAs. This chain is 5'/3'-nucleotidase SurE, found in Shigella dysenteriae serotype 1 (strain Sd197).